A 238-amino-acid chain; its full sequence is Tritrans,polycis-undecaprenyl-diphosphate synthase (geranylgeranyl-diphosphate specific) (238 aa).

D18 is a catalytic residue. Residue D18 coordinates Mg(2+). Substrate-binding positions include 19-22 and 64-66; these read GNRR and STE. N67 serves as the catalytic Proton acceptor. Residues R70, R187, and 193 to 195 contribute to the substrate site; that span reads RLS. Position 206 (E206) interacts with Mg(2+).

The protein belongs to the UPP synthase family. As to quaternary structure, homodimer. The cofactor is Mg(2+).

It catalyses the reaction geranylgeranyl diphosphate + 7 isopentenyl diphosphate = tri-trans,hepta-cis-undecaprenyl diphosphate + 7 diphosphate. In terms of biological role, catalyzes the sequential condensation of isopentenyl diphosphate (IPP) with geranylgeranyl diphosphate (GGPP) to yield (2Z,6Z,10Z,14Z,18Z,22Z,26Z,30E,34E,38E)-undecaprenyl diphosphate (tritrans,heptacis-UPP). It is probably the precursor of glycosyl carrier lipids. The chain is Tritrans,polycis-undecaprenyl-diphosphate synthase (geranylgeranyl-diphosphate specific) from Pyrobaculum aerophilum (strain ATCC 51768 / DSM 7523 / JCM 9630 / CIP 104966 / NBRC 100827 / IM2).